We begin with the raw amino-acid sequence, 272 residues long: MTVFAASQQSAAGAGMLPSHQARLACRAGQADTTAGVAPGYVQGNLAILPEKFAAAFHRFCQLNPKPCPIIGMSDVGNPMIPALGLDLDIRTDLPRYRVWRDGEVIEEPTDIMAHWRDDLVAFVIGCSFSFEEALLADDIAIRHIDCKVRVPMYRTNIPCAPAGPFAGPMVVSMRPMKPKDAIRAVQITSRFPSVHGAPVHIGLPQSIGIADIAKPDYGDPVPIADDELPVFWACGVTPQAVIAAAKVPFAITHAPGLMLVTDLKNKHLAVL.

Belongs to the D-glutamate cyclase family.

This is Putative hydro-lyase RPB_3621 from Rhodopseudomonas palustris (strain HaA2).